The following is a 461-amino-acid chain: Cysteine--tRNA ligase (461 aa).

Cys-28 provides a ligand contact to Zn(2+). Residues 30–40 (ITVYDLCHIGH) carry the 'HIGH' region motif. Zn(2+) is bound by residues Cys-209, His-234, and Glu-238. A 'KMSKS' region motif is present at residues 266-270 (KMSKS). Lys-269 is a binding site for ATP.

The protein belongs to the class-I aminoacyl-tRNA synthetase family. Monomer. Zn(2+) serves as cofactor.

It is found in the cytoplasm. The enzyme catalyses tRNA(Cys) + L-cysteine + ATP = L-cysteinyl-tRNA(Cys) + AMP + diphosphate. The chain is Cysteine--tRNA ligase from Escherichia coli (strain SMS-3-5 / SECEC).